Consider the following 426-residue polypeptide: Enolase 1 (426 aa).

Q162 provides a ligand contact to (2R)-2-phosphoglycerate. The active-site Proton donor is the E204. D241, E284, and D311 together coordinate Mg(2+). (2R)-2-phosphoglycerate contacts are provided by K336, R365, S366, and K387. Catalysis depends on K336, which acts as the Proton acceptor.

It belongs to the enolase family. Mg(2+) is required as a cofactor.

Its subcellular location is the cytoplasm. The protein localises to the secreted. It is found in the cell surface. The catalysed reaction is (2R)-2-phosphoglycerate = phosphoenolpyruvate + H2O. It participates in carbohydrate degradation; glycolysis; pyruvate from D-glyceraldehyde 3-phosphate: step 4/5. Its function is as follows. Catalyzes the reversible conversion of 2-phosphoglycerate (2-PG) into phosphoenolpyruvate (PEP). It is essential for the degradation of carbohydrates via glycolysis. The polypeptide is Enolase 1 (Methanospirillum hungatei JF-1 (strain ATCC 27890 / DSM 864 / NBRC 100397 / JF-1)).